Consider the following 301-residue polypeptide: Formylmethanofuran--tetrahydromethanopterin formyltransferase-like protein (301 aa).

Belongs to the FTR family.

This is Formylmethanofuran--tetrahydromethanopterin formyltransferase-like protein from Archaeoglobus fulgidus (strain ATCC 49558 / DSM 4304 / JCM 9628 / NBRC 100126 / VC-16).